Consider the following 835-residue polypeptide: U-box domain-containing protein 35 (835 aa).

Disordered stretches follow at residues 1-22, 177-303, and 410-457; these read MSRS…SRTV, VRPS…SSNR, and EKEK…LEGT. The segment covering 10-19 has biased composition (pro residues); the sequence is LPPPPPPPPS. Over residues 195-218 the composition is skewed to low complexity; sequence RTNSSSGSSGPTSDSSDVMSSAHD. The span at 269–282 shows a compositional bias: polar residues; sequence SSINRSSTDTTSRW. Composition is skewed to basic and acidic residues over residues 285-295 and 410-455; these read RRRDYEERKEA and EKEK…EKLE. The stretch at 340–459 forms a coiled coil; sequence QSYTDNQVNL…EKEKLEGTLG (120 aa). Positions 480–745 constitute a Protein kinase domain; it reads FSEELKIGMG…DLKDQILPAL (266 aa). ATP is bound by residues 486 to 494 and lysine 507; that span reads IGMGAYGAV. The active-site Proton acceptor is aspartate 602. The U-box domain maps to 765–835; it reads QPPTHFICPL…TAIMEWRSTR (71 aa).

The protein belongs to the protein kinase superfamily. Ser/Thr protein kinase family.

The catalysed reaction is L-seryl-[protein] + ATP = O-phospho-L-seryl-[protein] + ADP + H(+). The enzyme catalyses L-threonyl-[protein] + ATP = O-phospho-L-threonyl-[protein] + ADP + H(+). It catalyses the reaction S-ubiquitinyl-[E2 ubiquitin-conjugating enzyme]-L-cysteine + [acceptor protein]-L-lysine = [E2 ubiquitin-conjugating enzyme]-L-cysteine + N(6)-ubiquitinyl-[acceptor protein]-L-lysine.. It participates in protein modification; protein ubiquitination. Functions as an E3 ubiquitin ligase. This Arabidopsis thaliana (Mouse-ear cress) protein is U-box domain-containing protein 35 (PUB35).